Here is an 82-residue protein sequence, read N- to C-terminus: ATP synthase subunit c, chloroplastic (82 aa).

The next 2 helical transmembrane spans lie at 3–23 (PLIS…ASIG) and 57–77 (FAFM…LLFA).

It belongs to the ATPase C chain family. As to quaternary structure, F-type ATPases have 2 components, F(1) - the catalytic core - and F(0) - the membrane proton channel. F(1) has five subunits: alpha(3), beta(3), gamma(1), delta(1), epsilon(1). F(0) has four main subunits: a(1), b(1), b'(1) and c(10-14). The alpha and beta chains form an alternating ring which encloses part of the gamma chain. F(1) is attached to F(0) by a central stalk formed by the gamma and epsilon chains, while a peripheral stalk is formed by the delta, b and b' chains.

Its subcellular location is the plastid. The protein resides in the chloroplast thylakoid membrane. Functionally, f(1)F(0) ATP synthase produces ATP from ADP in the presence of a proton or sodium gradient. F-type ATPases consist of two structural domains, F(1) containing the extramembraneous catalytic core and F(0) containing the membrane proton channel, linked together by a central stalk and a peripheral stalk. During catalysis, ATP synthesis in the catalytic domain of F(1) is coupled via a rotary mechanism of the central stalk subunits to proton translocation. In terms of biological role, key component of the F(0) channel; it plays a direct role in translocation across the membrane. A homomeric c-ring of between 10-14 subunits forms the central stalk rotor element with the F(1) delta and epsilon subunits. This is ATP synthase subunit c, chloroplastic from Mesostigma viride (Green alga).